The chain runs to 1039 residues: FHIP family protein GG24907 (1039 aa).

Phosphoserine is present on residues serine 498 and serine 805. 3 disordered regions span residues alanine 831 to serine 877, glycine 904 to serine 945, and serine 957 to alanine 984. 2 stretches are compositionally biased toward polar residues: residues threonine 855–serine 877 and glycine 904–glutamine 924. Residues alanine 925–serine 945 show a composition bias toward low complexity. Residues serine 957–threonine 966 are compositionally biased toward polar residues.

It belongs to the FHIP family.

In Drosophila erecta (Fruit fly), this protein is FHIP family protein GG24907.